The chain runs to 178 residues: ATP synthase subunit delta (178 aa).

The protein belongs to the ATPase delta chain family. In terms of assembly, F-type ATPases have 2 components, F(1) - the catalytic core - and F(0) - the membrane proton channel. F(1) has five subunits: alpha(3), beta(3), gamma(1), delta(1), epsilon(1). F(0) has three main subunits: a(1), b(2) and c(10-14). The alpha and beta chains form an alternating ring which encloses part of the gamma chain. F(1) is attached to F(0) by a central stalk formed by the gamma and epsilon chains, while a peripheral stalk is formed by the delta and b chains.

It localises to the cell membrane. In terms of biological role, f(1)F(0) ATP synthase produces ATP from ADP in the presence of a proton or sodium gradient. F-type ATPases consist of two structural domains, F(1) containing the extramembraneous catalytic core and F(0) containing the membrane proton channel, linked together by a central stalk and a peripheral stalk. During catalysis, ATP synthesis in the catalytic domain of F(1) is coupled via a rotary mechanism of the central stalk subunits to proton translocation. Its function is as follows. This protein is part of the stalk that links CF(0) to CF(1). It either transmits conformational changes from CF(0) to CF(1) or is implicated in proton conduction. The chain is ATP synthase subunit delta from Streptococcus equi subsp. zooepidemicus (strain H70).